A 287-amino-acid polypeptide reads, in one-letter code: Mitochondrial dicarboxylate carrier (287 aa).

Solcar repeat units lie at residues 8 to 88, 101 to 188, and 197 to 280; these read SRWY…VRDR, EKVL…AKQL, and DNIF…LRKN. 6 helical membrane passes run 10 to 30, 63 to 82, 103 to 123, 163 to 182, 203 to 223, and 255 to 275; these read WYFG…LDLL, GLSA…FAIY, VLLG…ADLV, GATM…LSCY, FVAS…LDVL, and GLVP…VFLE.

It belongs to the mitochondrial carrier (TC 2.A.29) family. Present in high amounts in liver and kidney, and at lower levels in all the other tissues analyzed.

The protein localises to the mitochondrion inner membrane. It catalyses the reaction (S)-malate(in) + phosphate(out) = (S)-malate(out) + phosphate(in). The catalysed reaction is malonate(out) + (S)-malate(in) = malonate(in) + (S)-malate(out). It carries out the reaction (S)-malate(in) + succinate(out) = (S)-malate(out) + succinate(in). The enzyme catalyses (S)-malate(in) + sulfate(out) = (S)-malate(out) + sulfate(in). It catalyses the reaction malonate(out) + phosphate(in) = malonate(in) + phosphate(out). The catalysed reaction is succinate(out) + phosphate(in) = succinate(in) + phosphate(out). It carries out the reaction sulfate(out) + phosphate(in) = sulfate(in) + phosphate(out). The enzyme catalyses malonate(out) + succinate(in) = malonate(in) + succinate(out). Functionally, catalyzes the electroneutral exchange or flux of physiologically important metabolites such as dicarboxylates (malonate, malate, succinate), inorganic sulfur-containing anions, and phosphate, across mitochondrial inner membrane. Plays an important role in gluconeogenesis, fatty acid metabolism, urea synthesis, and sulfur metabolism, particularly in liver, by supplying the substrates for the different metabolic processes. Regulates fatty acid release from adipocytes, and contributes to systemic insulin sensitivity. In Homo sapiens (Human), this protein is Mitochondrial dicarboxylate carrier (SLC25A10).